Reading from the N-terminus, the 237-residue chain is UDP-2,3-diacylglucosamine hydrolase (237 aa).

Positions 8, 10, 41, 78, and 113 each coordinate Mn(2+). Residue 78 to 79 (NR) participates in substrate binding. Positions 121, 159, 164, and 195 each coordinate substrate. Residues His-195 and His-197 each coordinate Mn(2+).

This sequence belongs to the LpxH family. Mn(2+) is required as a cofactor.

Its subcellular location is the cell inner membrane. It carries out the reaction UDP-2-N,3-O-bis[(3R)-3-hydroxytetradecanoyl]-alpha-D-glucosamine + H2O = 2-N,3-O-bis[(3R)-3-hydroxytetradecanoyl]-alpha-D-glucosaminyl 1-phosphate + UMP + 2 H(+). The protein operates within glycolipid biosynthesis; lipid IV(A) biosynthesis; lipid IV(A) from (3R)-3-hydroxytetradecanoyl-[acyl-carrier-protein] and UDP-N-acetyl-alpha-D-glucosamine: step 4/6. In terms of biological role, hydrolyzes the pyrophosphate bond of UDP-2,3-diacylglucosamine to yield 2,3-diacylglucosamine 1-phosphate (lipid X) and UMP by catalyzing the attack of water at the alpha-P atom. Involved in the biosynthesis of lipid A, a phosphorylated glycolipid that anchors the lipopolysaccharide to the outer membrane of the cell. The polypeptide is UDP-2,3-diacylglucosamine hydrolase (Chromobacterium violaceum (strain ATCC 12472 / DSM 30191 / JCM 1249 / CCUG 213 / NBRC 12614 / NCIMB 9131 / NCTC 9757 / MK)).